An 84-amino-acid polypeptide reads, in one-letter code: Delta-conotoxin-like MVIB (84 aa).

The first 22 residues, methionine 1–alanine 22, serve as a signal peptide directing secretion. Residues aspartate 23 to arginine 51 constitute a propeptide that is removed on maturation. Disulfide bonds link cysteine 54–cysteine 69, cysteine 61–cysteine 73, and cysteine 68–cysteine 77. Proline 65 is modified (4-hydroxyproline). Serine amide is present on serine 83.

The protein belongs to the conotoxin O1 superfamily. In terms of tissue distribution, expressed by the venom duct.

It localises to the secreted. Delta-conotoxins bind to site 6 of voltage-gated sodium channels (Nav) and inhibit the inactivation process. This Conus magus (Magical cone) protein is Delta-conotoxin-like MVIB.